The primary structure comprises 97 residues: Signal recognition particle 19 kDa protein (97 aa).

The protein belongs to the SRP19 family. As to quaternary structure, part of the signal recognition particle protein translocation system, which is composed of SRP and FtsY. Archaeal SRP consists of a 7S RNA molecule of 300 nucleotides and two protein subunits: SRP54 and SRP19.

It is found in the cytoplasm. Its function is as follows. Involved in targeting and insertion of nascent membrane proteins into the cytoplasmic membrane. Binds directly to 7S RNA and mediates binding of the 54 kDa subunit of the SRP. The chain is Signal recognition particle 19 kDa protein from Pyrobaculum calidifontis (strain DSM 21063 / JCM 11548 / VA1).